The following is a 139-amino-acid chain: Putative translationally-controlled tumor protein-like protein TPT1P8 (139 aa).

The 139-residue stretch at 1–139 (MIIFQDLISH…KTTSSLLVKT (139 aa)) folds into the TCTP domain. The span at 40–51 (TGNTDDSLIGRN) shows a compositional bias: polar residues. Positions 40–60 (TGNTDDSLIGRNSSSESTEDE) are disordered.

This sequence belongs to the TCTP family.

This chain is Putative translationally-controlled tumor protein-like protein TPT1P8 (TPT1P8), found in Homo sapiens (Human).